Reading from the N-terminus, the 618-residue chain is UvrABC system protein C (618 aa).

The GIY-YIG domain maps to 13 to 92 (DKPGVYLMKN…IKKYRPKYNI (80 aa)). Positions 204–239 (LDIVENFKLNMEKAAGNLEFEKAAMLRDKINIIEKI) constitute a UVR domain.

It belongs to the UvrC family. In terms of assembly, interacts with UvrB in an incision complex.

Its subcellular location is the cytoplasm. The UvrABC repair system catalyzes the recognition and processing of DNA lesions. UvrC both incises the 5' and 3' sides of the lesion. The N-terminal half is responsible for the 3' incision and the C-terminal half is responsible for the 5' incision. The polypeptide is UvrABC system protein C (Clostridium botulinum (strain 657 / Type Ba4)).